The chain runs to 238 residues: Chromosome partition protein MukE (238 aa).

This sequence belongs to the MukE family. Interacts, and probably forms a ternary complex, with MukF and MukB. The complex formation is stimulated by calcium or magnesium.

It is found in the cytoplasm. It localises to the nucleoid. Functionally, involved in chromosome condensation, segregation and cell cycle progression. May participate in facilitating chromosome segregation by condensation DNA from both sides of a centrally located replisome during cell division. Probably acts via its interaction with MukB and MukF. The polypeptide is Chromosome partition protein MukE (Haemophilus ducreyi (strain 35000HP / ATCC 700724)).